The following is a 142-amino-acid chain: Large ribosomal subunit protein uL13 (142 aa).

This sequence belongs to the universal ribosomal protein uL13 family. In terms of assembly, part of the 50S ribosomal subunit.

In terms of biological role, this protein is one of the early assembly proteins of the 50S ribosomal subunit, although it is not seen to bind rRNA by itself. It is important during the early stages of 50S assembly. This chain is Large ribosomal subunit protein uL13, found in Lachnospira eligens (strain ATCC 27750 / DSM 3376 / VPI C15-48 / C15-B4) (Eubacterium eligens).